Here is a 670-residue protein sequence, read N- to C-terminus: Segment polarity protein dishevelled homolog DVL-1 (670 aa).

One can recognise a DIX domain in the interval 1–85 (MAETKIIYHM…RVVSWLVLAE (85 aa)). Residues 89–237 (SDAGSQGTDS…LRQADRASSF (149 aa)) form a disordered region. A compositionally biased stretch (basic residues) spans 142-151 (SHRRERARRR). The span at 152–171 (NREEAARTNGHPRGDRRRDV) shows a compositional bias: basic and acidic residues. Residues 176–192 (DSASTALSSELESSSFV) are compositionally biased toward low complexity. The residue at position 194 (serine 194) is a Phosphoserine. Over residues 200-214 (TSRLSSSTEQSTSSR) the composition is skewed to low complexity. Positions 215–228 (LIRKHKRRRRKQRL) are enriched in basic residues. The 73-residue stretch at 251-323 (TVTLNMERHH…NDDAVRVLRE (73 aa)) folds into the PDZ domain. Positions 400 to 474 (PDSGLEIRDR…SEQCYYVFGD (75 aa)) constitute a DEP domain. The tract at residues 518-642 (PGPPPCFPPA…PGGPPVRELA (125 aa)) is disordered. Residues 526–555 (PAYQDPGFSYGSGSTGSQQSEGSKSSGSTR) are compositionally biased toward low complexity. The span at 600–611 (SRGSSPRSQASA) shows a compositional bias: polar residues.

It belongs to the DSH family. Interacts with CXXC4. Interacts (via PDZ domain) with NXN. Interacts with BRD7 and INVS. Interacts (via PDZ domain) with VANGL1 and VANGL2 (via C-terminus). Interacts with ARRB1; the interaction is enhanced by phosphorylation of DVL1. Interacts with CYLD. Interacts (via PDZ domain) with RYK. Self-associates (via DIX domain) and forms higher homooligomers. Interacts (via PDZ domain) with DACT1 and FZD7, where DACT1 and FZD7 compete for the same binding site. Interacts (via DEP domain) with MUSK; the interaction is direct and mediates the formation a DVL1, MUSK and PAK1 ternary complex involved in AChR clustering. Interacts (via PDZ domain) with TMEM88. Interacts with DCDC2. Interacts with FOXK2. Interacts with PKD1 (via extracellular domain). Interacts (via PDZ domain) with CCDC88C/DAPLE; competes with CCDC88C for binding to frizzled receptor FZD7 and dissociates from CCDC88C following initiation of non-canonical Wnt signaling when CCDC88C displaces DVL1 from ligand-activated FZD7. Post-translationally, ubiquitinated; undergoes both 'Lys-48'-linked ubiquitination, leading to its subsequent degradation by the ubiquitin-proteasome pathway, and 'Lys-63'-linked ubiquitination. The interaction with INVS is required for ubiquitination. Deubiquitinated by CYLD, which acts on 'Lys-63'-linked ubiquitin chains.

It is found in the cell membrane. The protein resides in the cytoplasm. Its subcellular location is the cytosol. The protein localises to the cytoplasmic vesicle. In terms of biological role, participates in Wnt signaling by binding to the cytoplasmic C-terminus of frizzled family members and transducing the Wnt signal to down-stream effectors. Plays a role both in canonical and non-canonical Wnt signaling. Plays a role in the signal transduction pathways mediated by multiple Wnt genes. Required for LEF1 activation upon WNT1 and WNT3A signaling. DVL1 and PAK1 form a ternary complex with MUSK which is important for MUSK-dependent regulation of AChR clustering during the formation of the neuromuscular junction (NMJ). In Pan troglodytes (Chimpanzee), this protein is Segment polarity protein dishevelled homolog DVL-1 (DVL1).